Consider the following 361-residue polypeptide: MVKQVFNFNAGPSALPKPALERAQKELLNFNDTQMSVMELSHRSQSYEEVHEQAQNLLRELLQIPNDYQILFLQGGASLQFTMLPMNLLTKGTIGNYVLTGSWSEKALKEAKLLGETHIAASTKANSYQSIPDFSEFQLNENDAYLHITSNNTIYGTQYQNFPEINHAPLIADMSSDILSRPLKVNQFGMIYAGAQKNLGPSGVTVVIVKKDLLNTKVEQVPTMLQYATHIKSDSLYNTPPTFSIYMLRNVLDWIKDLGGAEAIAKQNEEKAKIIYDTIDESNGFYVGHAEKGSRSLMNVTFNLRNEELNQQFLAKAKEQGFVGLNGHRSVGGCRASIYNAVPIDACIALRELMIQFKENA.

Arg43 contributes to the L-glutamate binding site. Pyridoxal 5'-phosphate is bound by residues Ala77–Ser78, Trp103, Thr153, Asp173, and Gln196. The residue at position 197 (Lys197) is an N6-(pyridoxal phosphate)lysine. Asn238–Thr239 contacts pyridoxal 5'-phosphate.

It belongs to the class-V pyridoxal-phosphate-dependent aminotransferase family. SerC subfamily. In terms of assembly, homodimer. Pyridoxal 5'-phosphate serves as cofactor.

It is found in the cytoplasm. The enzyme catalyses O-phospho-L-serine + 2-oxoglutarate = 3-phosphooxypyruvate + L-glutamate. The catalysed reaction is 4-(phosphooxy)-L-threonine + 2-oxoglutarate = (R)-3-hydroxy-2-oxo-4-phosphooxybutanoate + L-glutamate. The protein operates within amino-acid biosynthesis; L-serine biosynthesis; L-serine from 3-phospho-D-glycerate: step 2/3. Functionally, catalyzes the reversible conversion of 3-phosphohydroxypyruvate to phosphoserine and of 3-hydroxy-2-oxo-4-phosphonooxybutanoate to phosphohydroxythreonine. The sequence is that of Phosphoserine aminotransferase (serC) from Alkalihalobacillus alcalophilus (Bacillus alcalophilus).